The sequence spans 368 residues: N-succinylamino acid racemase (368 aa).

2-succinylbenzoate is bound by residues serine 135 and 161-163 (KLK). Lysine 163 (proton donor) is an active-site residue. Aspartate 189 lines the Mg(2+) pocket. Residue asparagine 191 participates in 2-succinylbenzoate binding. Positions 214 and 239 each coordinate Mg(2+). The active-site Proton acceptor is the lysine 263. A 2-succinylbenzoate-binding site is contributed by isoleucine 293.

The protein belongs to the mandelate racemase/muconate lactonizing enzyme family. MenC type 2 subfamily. In terms of assembly, homooctamer. A divalent metal cation is required as a cofactor.

The enzyme catalyses N-acetyl-D-methionine = N-acetyl-L-methionine. It catalyses the reaction (1R,6R)-6-hydroxy-2-succinyl-cyclohexa-2,4-diene-1-carboxylate = 2-succinylbenzoate + H2O. With respect to regulation, inhibited by EDTA and sulfhydryl reagents such as p-chloromercuribenzoic acid. Both OSBS and NAAAR activities are inhibited competitively by salicylhydroxamate. Functionally, acts as a N-succinylamino acid racemase (NSAR) that catalyzes the racemization of N-succinyl-phenylglycine and N-succinyl-methionine. Can catalyze the racemization of a broad range of N-acylamino acids, including N-acetyl-D/L-methionine, N-propionyl-D/L-methionine, N-butyryl-D/L-methionine and N-chloroacetyl-L-valine. Also converts 2-succinyl-6-hydroxy-2,4-cyclohexadiene-1-carboxylate (SHCHC) to 2-succinylbenzoate (OSB). Catalyzes both N-succinylamino acid racemization and OSB synthesis at equivalent rates. NSAR is probably the biological function of this enzyme. This chain is N-succinylamino acid racemase, found in Amycolatopsis sp.